The chain runs to 405 residues: NADH-quinone oxidoreductase subunit D (405 aa).

It belongs to the complex I 49 kDa subunit family. NDH-1 is composed of 14 different subunits. Subunits NuoB, C, D, E, F, and G constitute the peripheral sector of the complex.

The protein resides in the cell inner membrane. The catalysed reaction is a quinone + NADH + 5 H(+)(in) = a quinol + NAD(+) + 4 H(+)(out). Its function is as follows. NDH-1 shuttles electrons from NADH, via FMN and iron-sulfur (Fe-S) centers, to quinones in the respiratory chain. The immediate electron acceptor for the enzyme in this species is believed to be ubiquinone. Couples the redox reaction to proton translocation (for every two electrons transferred, four hydrogen ions are translocated across the cytoplasmic membrane), and thus conserves the redox energy in a proton gradient. This chain is NADH-quinone oxidoreductase subunit D, found in Afipia carboxidovorans (strain ATCC 49405 / DSM 1227 / KCTC 32145 / OM5) (Oligotropha carboxidovorans).